A 523-amino-acid chain; its full sequence is GMP synthase [glutamine-hydrolyzing] (523 aa).

The 198-residue stretch at 8-205 folds into the Glutamine amidotransferase type-1 domain; it reads KILILDFGSQ…VVGICGCECK (198 aa). Cys85 acts as the Nucleophile in catalysis. Residues His179 and Glu181 contribute to the active site. One can recognise a GMPS ATP-PPase domain in the interval 206–398; the sequence is WTAENIIEDA…LGLPAEMLNR (193 aa). 233 to 239 lines the ATP pocket; the sequence is SGGVDSS.

Homodimer.

It catalyses the reaction XMP + L-glutamine + ATP + H2O = GMP + L-glutamate + AMP + diphosphate + 2 H(+). The protein operates within purine metabolism; GMP biosynthesis; GMP from XMP (L-Gln route): step 1/1. Functionally, catalyzes the synthesis of GMP from XMP. This chain is GMP synthase [glutamine-hydrolyzing], found in Actinobacillus pleuropneumoniae serotype 3 (strain JL03).